Reading from the N-terminus, the 567-residue chain is Berberine bridge enzyme-like D-1 (567 aa).

The first 33 residues, 1-33 (MKRNISMFLQLLLIILMMISFLFTSLLVPSVSA), serve as a signal peptide directing secretion. Cysteines 42 and 103 form a disulfide. N50 carries N-linked (GlcNAc...) asparagine glycosylation. The FAD-binding PCMH-type domain maps to 81–257 (SKPKPTVIIV…YAWKIRLLKV (177 aa)). H118 bears the Pros-8alpha-FAD histidine mark. Residues N364 and N378 are each glycosylated (N-linked (GlcNAc...) asparagine).

The protein belongs to the oxygen-dependent FAD-linked oxidoreductase family. The cofactor is FAD. Mostly expressed in roots at low levels.

Its subcellular location is the vacuole. It participates in alkaloid biosynthesis; nicotine biosynthesis. In terms of biological role, involved in the biosynthesis of pyridine alkaloid natural products, leading mainly to the production of anabasine, anatabine, nicotine and nornicotine, effective deterrents against herbivores with antiparasitic and pesticide properties (neurotoxins); nornicotine serves as the precursor in the synthesis of the carcinogen compound N'-nitrosonornicotine (NNN). Catalyzes a late oxidation step subsequent to the pyridine ring condensation reaction in the biosynthesis of alkaloids. The protein is Berberine bridge enzyme-like D-1 of Nicotiana tabacum (Common tobacco).